A 351-amino-acid polypeptide reads, in one-letter code: MATWLVTGRAGFIGGNFVLEAVSRGIRVVNLDALTYAGNLNTLASLEGNADHIFVKGDIGDGALVTRLLQEHQPDAVLNFAAESHVDRSIEGPGAFIQTNVVGTLALLEAVRDYWKALPDTRRDAFRFLHVSTDEVYGTLGETGKFTETTPYAPNSPYSASKAASDHLVRAFHHTYGLPVLTTNCSNNYGPYHFPEKLIPLVIAKALAGEPLPVYGDGKQVRDWLFVSDHCEAIRTVLAKGRVGETYNVGGNSERQNIEVVQAICALLDQHRPREDGKPRESQIAYVTDRPGHDRRYAIDASKLKDELGWEPAYTFEQGIAQTVDWYLTNQTWVQGVLDGSYRLERIGATV.

NAD(+)-binding positions include 12-13 (FI), 32-35 (DALT), 58-59 (DI), 80-84 (FAAES), and threonine 99. Residue serine 84 participates in substrate binding. A substrate-binding site is contributed by threonine 133. The active-site Proton donor is the aspartate 134. Catalysis depends on proton acceptor residues glutamate 135 and tyrosine 158. Position 158-162 (158-162 (YSASK)) interacts with NAD(+). Position 187 (asparagine 187) interacts with substrate. NAD(+) is bound at residue asparagine 188. Substrate-binding positions include 197–198 (KL), 213–215 (PVY), arginine 222, asparagine 257, and 289–293 (DRPGH).

The protein belongs to the NAD(P)-dependent epimerase/dehydratase family. dTDP-glucose dehydratase subfamily. As to quaternary structure, homodimer. The cofactor is NAD(+).

It catalyses the reaction dTDP-alpha-D-glucose = dTDP-4-dehydro-6-deoxy-alpha-D-glucose + H2O. It participates in carbohydrate biosynthesis; dTDP-L-rhamnose biosynthesis. Its pathway is bacterial outer membrane biogenesis; LPS O-antigen biosynthesis. In terms of biological role, catalyzes the dehydration of dTDP-D-glucose to form dTDP-6-deoxy-D-xylo-4-hexulose via a three-step process involving oxidation, dehydration and reduction. The chain is dTDP-glucose 4,6-dehydratase (rfbB) from Xanthomonas campestris pv. campestris (strain ATCC 33913 / DSM 3586 / NCPPB 528 / LMG 568 / P 25).